Here is a 66-residue protein sequence, read N- to C-terminus: Large ribosomal subunit protein uL29 (66 aa).

It belongs to the universal ribosomal protein uL29 family.

The chain is Large ribosomal subunit protein uL29 from Lysinibacillus sphaericus (strain C3-41).